We begin with the raw amino-acid sequence, 300 residues long: GTPase Era (300 aa).

The Era-type G domain occupies K7–F175. The segment at G15–S22 is G1. Residue G15 to S22 coordinates GTP. Positions Q41–Q45 are G2. The G3 stretch occupies residues D62 to G65. Residues D62 to F66 and N124 to D127 each bind GTP. Positions N124 to D127 are G4. A G5 region spans residues I154–A156. The KH type-2 domain maps to I198–P283.

This sequence belongs to the TRAFAC class TrmE-Era-EngA-EngB-Septin-like GTPase superfamily. Era GTPase family. Monomer.

Its subcellular location is the cytoplasm. The protein localises to the cell inner membrane. Its function is as follows. An essential GTPase that binds both GDP and GTP, with rapid nucleotide exchange. Plays a role in 16S rRNA processing and 30S ribosomal subunit biogenesis and possibly also in cell cycle regulation and energy metabolism. The polypeptide is GTPase Era (Elusimicrobium minutum (strain Pei191)).